Here is a 353-residue protein sequence, read N- to C-terminus: tRNA N6-adenosine threonylcarbamoyltransferase (353 aa).

Fe cation contacts are provided by His-111 and His-115. Substrate-binding positions include 148–152, Asp-181, Gly-194, and Asn-286; that span reads LVSGG. Asp-314 contacts Fe cation.

Belongs to the KAE1 / TsaD family. The cofactor is Fe(2+).

The protein resides in the cytoplasm. It carries out the reaction L-threonylcarbamoyladenylate + adenosine(37) in tRNA = N(6)-L-threonylcarbamoyladenosine(37) in tRNA + AMP + H(+). Required for the formation of a threonylcarbamoyl group on adenosine at position 37 (t(6)A37) in tRNAs that read codons beginning with adenine. Is involved in the transfer of the threonylcarbamoyl moiety of threonylcarbamoyl-AMP (TC-AMP) to the N6 group of A37, together with TsaE and TsaB. TsaD likely plays a direct catalytic role in this reaction. The sequence is that of tRNA N6-adenosine threonylcarbamoyltransferase from Blochmanniella floridana.